We begin with the raw amino-acid sequence, 122 residues long: Large ribosomal subunit protein uL18 (122 aa).

This sequence belongs to the universal ribosomal protein uL18 family. As to quaternary structure, part of the 50S ribosomal subunit; part of the 5S rRNA/L5/L18/L25 subcomplex. Contacts the 5S and 23S rRNAs.

This is one of the proteins that bind and probably mediate the attachment of the 5S RNA into the large ribosomal subunit, where it forms part of the central protuberance. In Buchnera aphidicola subsp. Acyrthosiphon pisum (strain 5A), this protein is Large ribosomal subunit protein uL18.